A 201-amino-acid chain; its full sequence is ADP-ribosylation factor-like protein 4D (201 aa).

Gly2 carries N-myristoyl glycine lipidation. GTP-binding positions include 28–35 (GLDSAGKT), 76–80 (DVGGQ), and 135–138 (NKQD).

This sequence belongs to the small GTPase superfamily. Arf family. As to quaternary structure, interacts with CYTH2; the interaction is direct and ARL4D GTP-dependent. Does not interact with ARL4D.

It is found in the nucleus. It localises to the nucleolus. The protein localises to the cell membrane. The protein resides in the cytoplasm. Functionally, small GTP-binding protein which cycles between an inactive GDP-bound and an active GTP-bound form, and the rate of cycling is regulated by guanine nucleotide exchange factors (GEF) and GTPase-activating proteins (GAP). GTP-binding protein that does not act as an allosteric activator of the cholera toxin catalytic subunit. Recruits CYTH1, CYTH2, CYTH3 and CYTH4 to the plasma membrane in GDP-bound form. The sequence is that of ADP-ribosylation factor-like protein 4D (Arl4d) from Mus musculus (Mouse).